The chain runs to 533 residues: CTP synthase (533 aa).

The amidoligase domain stretch occupies residues 1–268; the sequence is MGETKYIFVT…DETILQKMGL (268 aa). Ser15 contacts CTP. Residue Ser15 participates in UTP binding. Residue 16-21 coordinates ATP; that stretch reads SLGKGI. Tyr56 serves as a coordination point for L-glutamine. Asp73 contacts ATP. The Mg(2+) site is built by Asp73 and Glu143. Residues 150-152, 189-194, and Lys225 contribute to the CTP site; these read DIE and KTKPTQ. Residues 189-194 and Lys225 each bind UTP; that span reads KTKPTQ. Positions 301–533 constitute a Glutamine amidotransferase type-1 domain; the sequence is YVELQDAYKS…VSFIKAAIDK (233 aa). Gly356 lines the L-glutamine pocket. Cys383 serves as the catalytic Nucleophile; for glutamine hydrolysis. Residues 384-387, Glu407, and Arg464 each bind L-glutamine; that span reads LGMQ. Residues His509 and Glu511 contribute to the active site.

Belongs to the CTP synthase family. Homotetramer.

It carries out the reaction UTP + L-glutamine + ATP + H2O = CTP + L-glutamate + ADP + phosphate + 2 H(+). The catalysed reaction is L-glutamine + H2O = L-glutamate + NH4(+). The enzyme catalyses UTP + NH4(+) + ATP = CTP + ADP + phosphate + 2 H(+). It functions in the pathway pyrimidine metabolism; CTP biosynthesis via de novo pathway; CTP from UDP: step 2/2. Allosterically activated by GTP, when glutamine is the substrate; GTP has no effect on the reaction when ammonia is the substrate. The allosteric effector GTP functions by stabilizing the protein conformation that binds the tetrahedral intermediate(s) formed during glutamine hydrolysis. Inhibited by the product CTP, via allosteric rather than competitive inhibition. Functionally, catalyzes the ATP-dependent amination of UTP to CTP with either L-glutamine or ammonia as the source of nitrogen. Regulates intracellular CTP levels through interactions with the four ribonucleotide triphosphates. The chain is CTP synthase from Bacteroides fragilis (strain YCH46).